Here is a 544-residue protein sequence, read N- to C-terminus: Chromatin assembly factor 1 subunit A (544 aa).

Residues 1–22 (MNSESVDSDVAASTSNKGNELC) show a composition bias toward polar residues. Disordered stretches follow at residues 1-52 (MNSE…EADE), 67-117 (IYNG…REQE), and 138-160 (QEQQRRKEERDQKLREKEEAQRL). A compositionally biased stretch (low complexity) spans 23–35 (SSSTDITSLSVSS). Positions 36–47 (PNESVIHSSHSA) are enriched in polar residues. Positions 56–170 (KLSYEGNRKK…RQEQILNKER (115 aa)) are interaction with DNA and pcn1/PCNA. Positions 74–117 (AGKEKKLQKQRAQEERIRQKEAERLKREKERQQREQEKKLREQE) are enriched in basic and acidic residues. Residues 76 to 176 (KEKKLQKQRA…NKERQQLKLN (101 aa)) are a coiled coil. A PCNA-interaction protein (PIP box) motif is present at residues 172–179 (QLKLNNFF). The segment at 325 to 396 (SNVLLNPWLE…DKDSVNASNT (72 aa)) is interaction with histones H3/H4. A compositionally biased stretch (acidic residues) spans 351–388 (DEEDDGEDLESEDEEVDNSDDIVEDGDNAFVDDEDDDK). The interval 351 to 400 (DEEDDGEDLESEDEEVDNSDDIVEDGDNAFVDDEDDDKDSVNASNTHRSS) is disordered.

The protein belongs to the RLF2 family. Component of chromatin assembly factor 1 (CAF-1), composed of pcf1, pcf2 and pcf3. Interacts (via PIP motif) with pcn1/PCNA; the interaction is direct and occurs during S-phase. Interacts with swi6 at the G1/S-phase transition and early S-phase, but not in the G2 phase. The CAF-1 complex interacts with histone H3/H4 dimers.

The protein localises to the nucleus. In terms of biological role, acts as a component of the histone chaperone complex chromatin assembly factor 1 (CAF-1), which assembles histone octamers onto DNA during replication and repair. CAF-1 performs the first step of the nucleosome assembly process, bringing newly synthesized histones H3 and H4 to replicating DNA; histones H2A/H2B can bind to this chromatin precursor subsequent to DNA replication to complete the histone octamer. Plays a role in the maintenance of heterochromatin. This Schizosaccharomyces pombe (strain 972 / ATCC 24843) (Fission yeast) protein is Chromatin assembly factor 1 subunit A.